Here is a 340-residue protein sequence, read N- to C-terminus: Ketol-acid reductoisomerase (NADP(+)) (340 aa).

One can recognise a KARI N-terminal Rossmann domain in the interval 1 to 182 (MRVYYDRDCD…GGGRSGIIET (182 aa)). NADP(+) contacts are provided by residues 24–27 (YGSQ), R48, S51, S53, and 83–86 (DELQ). Residue H108 is part of the active site. G134 lines the NADP(+) pocket. The 147-residue stretch at 183–329 (NFRQECETDL…EKLRGMMPWI (147 aa)) folds into the KARI C-terminal knotted domain. Mg(2+) contacts are provided by D191, E195, E227, and E231. S252 contacts substrate.

The protein belongs to the ketol-acid reductoisomerase family. Requires Mg(2+) as cofactor.

It carries out the reaction (2R)-2,3-dihydroxy-3-methylbutanoate + NADP(+) = (2S)-2-acetolactate + NADPH + H(+). The enzyme catalyses (2R,3R)-2,3-dihydroxy-3-methylpentanoate + NADP(+) = (S)-2-ethyl-2-hydroxy-3-oxobutanoate + NADPH + H(+). The protein operates within amino-acid biosynthesis; L-isoleucine biosynthesis; L-isoleucine from 2-oxobutanoate: step 2/4. Its pathway is amino-acid biosynthesis; L-valine biosynthesis; L-valine from pyruvate: step 2/4. In terms of biological role, involved in the biosynthesis of branched-chain amino acids (BCAA). Catalyzes an alkyl-migration followed by a ketol-acid reduction of (S)-2-acetolactate (S2AL) to yield (R)-2,3-dihydroxy-isovalerate. In the isomerase reaction, S2AL is rearranged via a Mg-dependent methyl migration to produce 3-hydroxy-3-methyl-2-ketobutyrate (HMKB). In the reductase reaction, this 2-ketoacid undergoes a metal-dependent reduction by NADPH to yield (R)-2,3-dihydroxy-isovalerate. The chain is Ketol-acid reductoisomerase (NADP(+)) from Paracoccus denitrificans (strain Pd 1222).